The chain runs to 157 residues: MSRRKTIEKRPVTPDPRFNSVLVAKFTNGLMERGKKSLAQRIFYDAMDLVADRMKDEEPLTVFEEAMEKVRPRVEVKSRRVGGATYQVPMEIRQARRNALAIRWIISYAKSRSGKCMSEKLASEVMDAFNNRGAAVKKRDDTHRMAEANKAFAHYRW.

Belongs to the universal ribosomal protein uS7 family. As to quaternary structure, part of the 30S ribosomal subunit. Contacts proteins S9 and S11.

Its function is as follows. One of the primary rRNA binding proteins, it binds directly to 16S rRNA where it nucleates assembly of the head domain of the 30S subunit. Is located at the subunit interface close to the decoding center, probably blocks exit of the E-site tRNA. In Desulfotalea psychrophila (strain LSv54 / DSM 12343), this protein is Small ribosomal subunit protein uS7.